The following is a 574-amino-acid chain: Sulfate adenylyltransferase (574 aa).

Residues 1–169 (MANTPHGGVL…LEAVNKLNHY (169 aa)) are N-terminal. Residues 170–394 (DYVGLRYTPA…LRESSPPRAL (225 aa)) are catalytic. Residue Gln197 participates in sulfate binding. ATP-binding positions include 197–200 (QTRN) and 291–294 (GRDH). Catalysis depends on residues Thr198, Arg199, and Asn200. Arg199 is a binding site for sulfate. Sulfate is bound at residue Ala295. Val333 is an ATP binding site. An allosteric regulation domain; adenylyl-sulfate kinase-like region spans residues 395–574 (QGFTIFLTGY…LESEGYFERL (180 aa)). 3'-phosphoadenylyl sulfate contacts are provided by residues 434–437 (DTVR), Arg451, 477–478 (IA), and Arg516.

In the N-terminal section; belongs to the sulfate adenylyltransferase family. It in the C-terminal section; belongs to the APS kinase family. In terms of assembly, homohexamer. Dimer of trimers.

Its subcellular location is the cytoplasm. It carries out the reaction sulfate + ATP + H(+) = adenosine 5'-phosphosulfate + diphosphate. The protein operates within sulfur metabolism; hydrogen sulfide biosynthesis; sulfite from sulfate: step 1/3. With respect to regulation, allosterically inhibited by 3'-phosphoadenosine 5'-phosphosulfate (PAPS). Functionally, catalyzes the first intracellular reaction of sulfate assimilation, forming adenosine-5'-phosphosulfate (APS) from inorganic sulfate and ATP. Plays an important role in sulfate activation as a component of the biosynthesis pathway of sulfur-containing amino acids. The chain is Sulfate adenylyltransferase from Emericella nidulans (strain FGSC A4 / ATCC 38163 / CBS 112.46 / NRRL 194 / M139) (Aspergillus nidulans).